The chain runs to 816 residues: Phosphatidylinositol 4-kinase beta (816 aa).

3 disordered regions span residues 1–30, 101–120, and 248–318; these read MGDT…GSLL, EDEM…RRRR, and AHRK…SFSS. Position 2 is an N-acetylglycine (Gly2). The segment at 2-68 is interaction with ACBD3; it reads GDTVVEPAPL…VKLLHGGMAV (67 aa). Residues 52-242 enclose the PIK helical domain; that stretch reads CQDVLEKVKL…GTKLRKLILS (191 aa). Ser258 bears the Phosphoserine mark. Position 263 is a phosphothreonine (Thr263). Phosphoserine occurs at positions 266, 275, 277, 284, and 294. Composition is skewed to polar residues over residues 278 to 297 and 306 to 318; these read DATA…SNPK and SSST…SFSS. Ser428 bears the Phosphoserine mark. Residue Thr438 is modified to Phosphothreonine. A Phosphoserine modification is found at Ser511. 2 positions are modified to phosphothreonine: Thr517 and Thr519. Residues 535–801 form the PI3K/PI4K catalytic domain; the sequence is EPWQEKVRRI…MVDGSMRSIT (267 aa). A G-loop region spans residues 541-547; sequence VRRIREG. The segment at 668–676 is catalytic loop; it reads QVKDRHNGN. The activation loop stretch occupies residues 687–711; it reads HIDFGFILSSSPRNLGFETSAFKLT.

Belongs to the PI3/PI4-kinase family. Type III PI4K subfamily. As to quaternary structure, interacts with ARF1 and ARF3 in the Golgi complex, but not with ARF4, ARF5 or ARF6. Interacts with NCS1/FREQ in a calcium-independent manner. Interacts with CALN1/CABP8 and CALN2/CABP7; in a calcium-dependent manner; this interaction competes with NCS1/FREQ binding. Interacts with ACBD3. Interacts with ARMH3, YWHAB, YWHAE, YWHAG, YWHAH, YWHAQ, YWHAZ and SFN. Interacts with GGA2 (via VHS domain); the interaction is important for PI4KB location at the Golgi apparatus membrane. Interacts with ATG9A. The cofactor is Mg(2+). It depends on Mn(2+) as a cofactor.

Its subcellular location is the endomembrane system. The protein resides in the mitochondrion outer membrane. It is found in the rough endoplasmic reticulum membrane. It localises to the golgi apparatus. The protein localises to the golgi apparatus membrane. It catalyses the reaction a 1,2-diacyl-sn-glycero-3-phospho-(1D-myo-inositol) + ATP = a 1,2-diacyl-sn-glycero-3-phospho-(1D-myo-inositol 4-phosphate) + ADP + H(+). With respect to regulation, inhibited by wortmannin. Increased kinase activity upon interaction with NCS1/FREQ. Functionally, phosphorylates phosphatidylinositol (PI) in the first committed step in the production of the second messenger inositol-1,4,5,-trisphosphate (PIP). May regulate Golgi disintegration/reorganization during mitosis, possibly via its phosphorylation. Involved in Golgi-to-plasma membrane trafficking. This Plecturocebus moloch (Dusky titi monkey) protein is Phosphatidylinositol 4-kinase beta (PI4KB).